A 314-amino-acid chain; its full sequence is Bifunctional pinoresinol-lariciresinol reductase 3 (314 aa).

Residues 11-17 (GGTGFIG), Arg36, and Lys45 contribute to the NADP(+) site. Lys138 acts as the Proton acceptor in catalysis. Arg142 lines the NADP(+) pocket. His272 provides a ligand contact to substrate.

This sequence belongs to the NmrA-type oxidoreductase family. Isoflavone reductase subfamily. As to quaternary structure, dimer.

The catalysed reaction is (-)-lariciresinol + NADP(+) = (-)-pinoresinol + NADPH + H(+). It catalyses the reaction (+)-secoisolariciresinol + NADP(+) = (-)-lariciresinol + NADPH + H(+). Its function is as follows. Reductase involved in lignan biosynthesis. Catalyzes the enantioselective sequential conversion of (-)-pinoresinol into (-)-lariciresinol and of (-)-lariciresinol into (+)-secoisolariciresinol. Abstracts the 4R-hydride from the NADPH cofactor during catalysis. This is Bifunctional pinoresinol-lariciresinol reductase 3 from Thuja plicata (Western red-cedar).